Reading from the N-terminus, the 751-residue chain is MAFRAICVLVGVFICSICVRGSSQPQARVYLTFDELRETKTSEYFSLSHQQLDYRILLMDEDQDRIYVGSKDHILSLNINNISQEPLSVFWPASTIKVEECKMAGKDPTHGCGNFVRVIQTFNRTHLYVCGSGAFSPVCTYLNRGRRSEDQVFMIDSKCESGKGRCSFNPNVNTVSVMINEELFSGMYIDFMGTDAAIFRSLTKRNAVRTDQHNSKWLSEPMFVDAHVIPDGTDPNDAKVYFFFKERLTDNNRSTKQIHSMIARICPNDTGGQRSLVNKWTTFLKARLVCSVTDEDGPETHFDELEDVFLLETDNPRTTLVYGIFTTSSSVFKGSAVCVYHLSDIQTVFNGPFAHKEGPNHQLISYQGRIPYPRPGTCPGGAFTPNMRTTKDFPDDVVTFIRNHPLMYNSIYPIHRRPLIVRIGTDYKYTKIAVDRVNAADGRYHVLFLGTDRGTVQKVVVLPTNSSASGELILEELEVFKNHVPITTMKISSKKQQLYVSSNEGVSQVSLHRCHIYGTACADCCLARDPYCAWDGHSCSRFYPTGKRRSRRQDVRHGNPLTQCRGFNLKAYRNAAEIVQYGVRNNSTFLECAPKSPQASIKWLLQKDKDRRKEVKLNERIIATSQGLLIRSVQDSDQGLYHCIATENSFKQTIAKINFKVLDSEMVAVVTDKWSPWTWAGSVRALPFHPKDILGAFSHSEMQLINQYCKDTRQQQQLGEEPQKMRGDYGKLKALINSRKSRNRRNQLPES.

The N-terminal stretch at 1-20 (MAFRAICVLVGVFICSICVR) is a signal peptide. The region spanning 28–511 (RVYLTFDELR…SNEGVSQVSL (484 aa)) is the Sema domain. Asn81 is a glycosylation site (N-linked (GlcNAc...) asparagine). The cysteines at positions 101 and 112 are disulfide-linked. Asn123 carries N-linked (GlcNAc...) asparagine glycosylation. Cys130 and Cys139 are disulfide-bonded. N-linked (GlcNAc...) asparagine glycosylation is found at Asn252 and Asn268. Intrachain disulfides connect Cys266/Cys378 and Cys290/Cys338. A glycan (N-linked (GlcNAc...) asparagine) is linked at Asn465. Cys514 and Cys532 are disulfide-bonded. The Ig-like C2-type domain maps to 571–655 (AYRNAAEIVQ…TENSFKQTIA (85 aa)). 2 N-linked (GlcNAc...) asparagine glycosylation sites follow: Asn585 and Asn586. Residues Cys643 and Cys709 are joined by a disulfide bond.

It belongs to the semaphorin family. In terms of assembly, interacts with PLXND1.

The protein localises to the secreted. Functionally, binds to plexin family members and plays an important role in the regulation of developmental processes. Required for normal cardiovascular development during embryogenesis. Functions as attractant for growing axons, and thereby plays an important role in axon growth and axon guidance. This Mus musculus (Mouse) protein is Semaphorin-3C (Sema3c).